The primary structure comprises 112 residues: Photosystem II reaction center Psb28 protein (112 aa).

The protein belongs to the Psb28 family. Part of the photosystem II complex.

It localises to the cellular thylakoid membrane. This Synechocystis sp. (strain ATCC 27184 / PCC 6803 / Kazusa) protein is Photosystem II reaction center Psb28 protein.